The primary structure comprises 792 residues: Probable CoA-transferase Rv1866 (792 aa).

The active-site Nucleophile is the D558.

It belongs to the CoA-transferase III family.

In terms of biological role, probable CoA-transferase. The polypeptide is Probable CoA-transferase Rv1866 (Mycobacterium tuberculosis (strain ATCC 25618 / H37Rv)).